A 210-amino-acid polypeptide reads, in one-letter code: Imidazoleglycerol-phosphate dehydratase (210 aa).

This sequence belongs to the imidazoleglycerol-phosphate dehydratase family.

Its subcellular location is the cytoplasm. The catalysed reaction is D-erythro-1-(imidazol-4-yl)glycerol 3-phosphate = 3-(imidazol-4-yl)-2-oxopropyl phosphate + H2O. It functions in the pathway amino-acid biosynthesis; L-histidine biosynthesis; L-histidine from 5-phospho-alpha-D-ribose 1-diphosphate: step 6/9. This chain is Imidazoleglycerol-phosphate dehydratase, found in Mycobacterium marinum (strain ATCC BAA-535 / M).